A 146-amino-acid chain; its full sequence is Transcriptional regulator MraZ (146 aa).

2 SpoVT-AbrB domains span residues 5–50 (SSFH…TFNE) and 77–120 (ACEC…SREQ).

Belongs to the MraZ family. As to quaternary structure, forms oligomers.

Its subcellular location is the cytoplasm. It is found in the nucleoid. In Desulforapulum autotrophicum (strain ATCC 43914 / DSM 3382 / VKM B-1955 / HRM2) (Desulfobacterium autotrophicum), this protein is Transcriptional regulator MraZ.